Consider the following 565-residue polypeptide: Ubiquitin carboxyl-terminal hydrolase 21 (565 aa).

Residues 1–14 show a composition bias toward basic and acidic residues; sequence MPQASEHRLGRTRE. Disordered regions lie at residues 1 to 103, 109 to 128, and 142 to 163; these read MPQA…LPLP, ARSKSVSSGDLRPMGIALGG, and LALRPEPPPLRRSTSLRRLGGF. Over residues 42–57 the composition is skewed to pro residues; sequence APGPNPMLRPLPPRPG. A compositionally biased stretch (basic and acidic residues) spans 58–70; it reads PPEERLKKLELGR. Over residues 71 to 82 the composition is skewed to low complexity; sequence GRTSGPRPSGPL. Residues 134–152 carry the Nuclear export signal motif; sequence ELGAALSRLALRPEPPPLR. Positions 212 to 558 constitute a USP domain; it reads VGLRNLGNTC…EGYVLFYQLM (347 aa). Cys221 serves as the catalytic Nucleophile. 4 residues coordinate Zn(2+): Cys384, Cys387, Cys437, and Cys440. His518 serves as the catalytic Proton acceptor.

Belongs to the peptidase C19 family. USP21 subfamily. In terms of assembly, interacts with BEND3.

The protein localises to the cytoplasm. The protein resides in the nucleus. It carries out the reaction Thiol-dependent hydrolysis of ester, thioester, amide, peptide and isopeptide bonds formed by the C-terminal Gly of ubiquitin (a 76-residue protein attached to proteins as an intracellular targeting signal).. Deubiquitinating enzyme that hydrolyzes 'Lys-6'- and 'Lys-11'-linked polyubiquitin. Also hydrolyzes heterotypic (mixed and branched) and homotypic chains. Important regulator of energy metabolism. Glucose and fatty acids trigger its nuclear translocation by CBP-dependent acetylation. In the nucleus, deubiquitinates and stabilizes the nuclear receptor PPARD regulating the expression of various genes involved in glucose and lipid metabolism and oxidative phosphorylation. Also acts as a negative regulator of the ribosome quality control (RQC) by mediating deubiquitination of 40S ribosomal proteins RPS10/eS10 and RPS20/uS10, thereby antagonizing ZNF598-mediated 40S ubiquitination. The chain is Ubiquitin carboxyl-terminal hydrolase 21 (USP21) from Bos taurus (Bovine).